Consider the following 179-residue polypeptide: Ribosome-recycling factor (179 aa).

It belongs to the RRF family.

The protein resides in the cytoplasm. In terms of biological role, responsible for the release of ribosomes from messenger RNA at the termination of protein biosynthesis. May increase the efficiency of translation by recycling ribosomes from one round of translation to another. This is Ribosome-recycling factor from Chlamydia trachomatis serovar D (strain ATCC VR-885 / DSM 19411 / UW-3/Cx).